The chain runs to 478 residues: Cytochrome P450 family 716 subfamily AD polypeptide 4 (478 aa).

A helical transmembrane segment spans residues 1 to 21 (MELFLPSVLLILTVFCFYYLF). A heme-binding site is contributed by Cys-425.

This sequence belongs to the cytochrome P450 family. It depends on heme as a cofactor. Mainly expressed in petioles and, to a lower extent, in roots.

It localises to the membrane. The catalysed reaction is (1S,3bR,4R,5aR,9aR,9bR,11aS)-1-[(4R)-5-[(2S)-3,3-dimethyloxiran-2-yl]-1,4-dihydroxybutan-2-yl]-3b,6,6,9a,11a-pentamethyl-7-oxo-1H,2H,3bH,4H,5H,5aH,6H,7H,9aH,9bH,10H,11H,11aH-cyclopenta[a]phenanthren-4-yl acetate + reduced [NADPH--hemoprotein reductase] + O2 = (1S,3bR,4R,5aR,9aR,9bR,11aS)-1-(1-hydroxy-4-oxobutan-2-yl)-3b,6,6,9a,11a-pentamethyl-7-oxo-1H,2H,3bH,4H,5H,5aH,6H,7H,9aH,9bH,10H,11H,11aH-cyclopenta[a]phenanthren-4-yl acetate + 2-methylpropanoate + oxidized [NADPH--hemoprotein reductase] + H2O + 2 H(+). It functions in the pathway secondary metabolite biosynthesis; terpenoid biosynthesis. Functionally, monooxygenase involved in the biosynthesis of limonoids triterpene natural products such as azadirachtin, an antifeedant widely used as bioinsecticide, and possessing many medicinal applications including anti-tumoral, anti-malarial, anti-rheumatic, antibacterial, anti-inflammatory, anti-pyretic and diuretic effects. Catalyzes the formation of (1S,3bR,4R,5aR,9aR,9bR,11aS)-1-(1-hydroxy-4-oxobutan-2-yl)-3b,6,6,9a,11a-pentamethyl-7-oxo-1H,2H,3bH,4H,5H,5aH,6H,7H,9aH,9bH,10H,11H,11aH-cyclopenta[a]phenanthren-4-yl acetate. The polypeptide is Cytochrome P450 family 716 subfamily AD polypeptide 4 (Melia azedarach (Chinaberry tree)).